The chain runs to 88 residues: Early E1B 9 kDa protein (88 aa).

The segment at 23–88 (NMEGSQDEDN…DLFPELRRLP (66 aa)) is disordered. The span at 34-44 (RLLASAASGSS) shows a compositional bias: low complexity.

The sequence is that of Early E1B 9 kDa protein from Homo sapiens (Human).